The following is a 37-amino-acid chain: Large ribosomal subunit protein bL36 (37 aa).

This sequence belongs to the bacterial ribosomal protein bL36 family.

This Trichodesmium erythraeum (strain IMS101) protein is Large ribosomal subunit protein bL36.